We begin with the raw amino-acid sequence, 363 residues long: Phosphoserine aminotransferase (363 aa).

Position 42 (Arg-42) interacts with L-glutamate. Pyridoxal 5'-phosphate contacts are provided by residues 76–77 (GR), Trp-102, Thr-156, Asp-175, and Gln-198. Residue Lys-199 is modified to N6-(pyridoxal phosphate)lysine. Position 240–241 (240–241 (NT)) interacts with pyridoxal 5'-phosphate.

It belongs to the class-V pyridoxal-phosphate-dependent aminotransferase family. SerC subfamily. In terms of assembly, homodimer. Pyridoxal 5'-phosphate serves as cofactor.

Its subcellular location is the cytoplasm. The enzyme catalyses O-phospho-L-serine + 2-oxoglutarate = 3-phosphooxypyruvate + L-glutamate. It carries out the reaction 4-(phosphooxy)-L-threonine + 2-oxoglutarate = (R)-3-hydroxy-2-oxo-4-phosphooxybutanoate + L-glutamate. Its pathway is amino-acid biosynthesis; L-serine biosynthesis; L-serine from 3-phospho-D-glycerate: step 2/3. It participates in cofactor biosynthesis; pyridoxine 5'-phosphate biosynthesis; pyridoxine 5'-phosphate from D-erythrose 4-phosphate: step 3/5. Functionally, catalyzes the reversible conversion of 3-phosphohydroxypyruvate to phosphoserine and of 3-hydroxy-2-oxo-4-phosphonooxybutanoate to phosphohydroxythreonine. The polypeptide is Phosphoserine aminotransferase (Shewanella frigidimarina (strain NCIMB 400)).